The primary structure comprises 118 residues: Small ribosomal subunit protein uS13 (118 aa).

Positions 91 to 118 (HRRSLPVRGQRTKTNARTRKGPRKPIRK) are disordered.

It belongs to the universal ribosomal protein uS13 family. Part of the 30S ribosomal subunit. Forms a loose heterodimer with protein S19. Forms two bridges to the 50S subunit in the 70S ribosome.

In terms of biological role, located at the top of the head of the 30S subunit, it contacts several helices of the 16S rRNA. In the 70S ribosome it contacts the 23S rRNA (bridge B1a) and protein L5 of the 50S subunit (bridge B1b), connecting the 2 subunits; these bridges are implicated in subunit movement. Contacts the tRNAs in the A and P-sites. In Marinomonas sp. (strain MWYL1), this protein is Small ribosomal subunit protein uS13.